The chain runs to 277 residues: Sulfur carrier protein FdhD (277 aa).

The Cysteine persulfide intermediate role is filled by Cys-121. Residue 260-265 (FCKPGR) participates in Mo-bis(molybdopterin guanine dinucleotide) binding.

Belongs to the FdhD family.

It is found in the cytoplasm. Its function is as follows. Required for formate dehydrogenase (FDH) activity. Acts as a sulfur carrier protein that transfers sulfur from IscS to the molybdenum cofactor prior to its insertion into FDH. The sequence is that of Sulfur carrier protein FdhD from Shigella dysenteriae serotype 1 (strain Sd197).